We begin with the raw amino-acid sequence, 177 residues long: Interleukin-1 receptor antagonist protein (177 aa).

The N-terminal stretch at 1–25 (MRPSRSTRRHLISLLLFLFHSETAC) is a signal peptide. Cysteines 91 and 141 form a disulfide. N109 carries an N-linked (GlcNAc...) asparagine glycan.

It belongs to the IL-1 family.

The protein localises to the secreted. Anti-inflammatory antagonist of interleukin-1 family of proinflammatory cytokines such as interleukin-1beta/IL1B and interleukin-1alpha/IL1A. Protects from immune dysregulation and uncontrolled systemic inflammation triggered by IL1 for a range of innate stimulatory agents such as pathogens. This Oryctolagus cuniculus (Rabbit) protein is Interleukin-1 receptor antagonist protein (IL1RN).